Reading from the N-terminus, the 237-residue chain is ATP synthase subunit a (237 aa).

A run of 5 helical transmembrane segments spans residues 18–38 (LTLL…VYWA), 77–97 (SLFL…GLMA), 114–134 (NIAF…VEGI), 167–187 (LALR…LLVT), and 208–230 (AFSV…MYLG).

The protein belongs to the ATPase A chain family. As to quaternary structure, F-type ATPases have 2 components, CF(1) - the catalytic core - and CF(0) - the membrane proton channel. CF(1) has five subunits: alpha(3), beta(3), gamma(1), delta(1), epsilon(1). CF(0) has three main subunits: a(1), b(2) and c(9-12). The alpha and beta chains form an alternating ring which encloses part of the gamma chain. CF(1) is attached to CF(0) by a central stalk formed by the gamma and epsilon chains, while a peripheral stalk is formed by the delta and b chains.

It localises to the cell membrane. Its function is as follows. Key component of the proton channel; it plays a direct role in the translocation of protons across the membrane. The polypeptide is ATP synthase subunit a (Streptococcus gordonii (strain Challis / ATCC 35105 / BCRC 15272 / CH1 / DL1 / V288)).